The following is a 518-amino-acid chain: 12S seed storage globulin 1 (518 aa).

The N-terminal stretch at 1–24 (MATTRFPSLLFYSCIFLLCNGSMA) is a signal peptide. 2 disulfide bridges follow: cysteine 45-cysteine 78 and cysteine 121-cysteine 324. A Cupin type-1 1 domain is found at 50–240 (LQAFEPLRQV…ALGISQQAAQ (191 aa)). Low complexity predominate over residues 281-295 (QSQQEQSTQYQVGQS). Residues 281-311 (QSQQEQSTQYQVGQSPQYQEGQSTQYQSGQS) are disordered. The segment covering 296–311 (PQYQEGQSTQYQSGQS) has biased composition (polar residues). A Cupin type-1 2 domain is found at 330–479 (QNIENPKRAD…AYRISRQESQ (150 aa)). A disordered region spans residues 496-518 (FAQTGSQSYQDEGESSSTEKASE).

It belongs to the 11S seed storage protein (globulins) family. In terms of assembly, hexamer; each subunit is composed of an acidic and a basic chain derived from a single precursor and linked by a disulfide bond.

This is a seed storage protein. In Avena sativa (Oat), this protein is 12S seed storage globulin 1.